The sequence spans 457 residues: Tubulin beta chain (457 aa).

GTP contacts are provided by Q11, E69, S138, G142, T143, G144, N204, and N226. E69 is a binding site for Mg(2+). Residues 431–457 form a disordered region; that stretch reads EGEEEEDAYAEGAVVNGDQSYEDQYAA.

The protein belongs to the tubulin family. In terms of assembly, dimer of alpha and beta chains. A typical microtubule is a hollow water-filled tube with an outer diameter of 25 nm and an inner diameter of 15 nM. Alpha-beta heterodimers associate head-to-tail to form protofilaments running lengthwise along the microtubule wall with the beta-tubulin subunit facing the microtubule plus end conferring a structural polarity. Microtubules usually have 13 protofilaments but different protofilament numbers can be found in some organisms and specialized cells. It depends on Mg(2+) as a cofactor.

The protein localises to the cytoplasm. It is found in the cytoskeleton. Functionally, tubulin is the major constituent of microtubules, a cylinder consisting of laterally associated linear protofilaments composed of alpha- and beta-tubulin heterodimers. Microtubules grow by the addition of GTP-tubulin dimers to the microtubule end, where a stabilizing cap forms. Below the cap, tubulin dimers are in GDP-bound state, owing to GTPase activity of alpha-tubulin. The polypeptide is Tubulin beta chain (TUBB1) (Porphyra purpurea (Red seaweed)).